Here is a 212-residue protein sequence, read N- to C-terminus: Cytidylate kinase (212 aa).

7–15 (GPAASGKGT) serves as a coordination point for ATP.

The protein belongs to the cytidylate kinase family. Type 1 subfamily.

Its subcellular location is the cytoplasm. It catalyses the reaction CMP + ATP = CDP + ADP. It carries out the reaction dCMP + ATP = dCDP + ADP. This Rhodopseudomonas palustris (strain TIE-1) protein is Cytidylate kinase.